A 349-amino-acid chain; its full sequence is MSKVRVLCVDDSALMRQLMTEIINSHPDMEMVAAAQDPLVARDLIKKFNPQVLTLDVEMPRMDGLDFLEKLMRLRPMPVVMVSSLTGKNSEITMRALELGAIDFVTKPQLGIREGMLAYSELIADKIRTAAKARLPQRVLENKPAMLSHTPLLSSEKLIAIGASTGGTEAIRAVLQPLPPTSPALLITQHMPPGFTRSFAERLNKLCQITVKEAEDGERVLPGHAYIAPGDRHLELARSGANYQVRIHDGPAVNRHRPSVDVLFRSVAQYAGRNAVGVILTGMGNDGAAGLLEMHRAGAYTLAQNEASCVVFGMPREAIAMGGVNDVVELNQISQRMLAQISSGQALRI.

Residues 5–122 (RVLCVDDSAL…REGMLAYSEL (118 aa)) enclose the Response regulatory domain. Residue D56 is modified to 4-aspartylphosphate. Residues 152–344 (LLSSEKLIAI…QRMLAQISSG (193 aa)) enclose the CheB-type methylesterase domain. Catalysis depends on residues S164, H190, and D286.

This sequence belongs to the CheB family. Phosphorylated by CheA. Phosphorylation of the N-terminal regulatory domain activates the methylesterase activity.

The protein localises to the cytoplasm. The enzyme catalyses [protein]-L-glutamate 5-O-methyl ester + H2O = L-glutamyl-[protein] + methanol + H(+). The catalysed reaction is L-glutaminyl-[protein] + H2O = L-glutamyl-[protein] + NH4(+). Functionally, involved in chemotaxis. Part of a chemotaxis signal transduction system that modulates chemotaxis in response to various stimuli. Catalyzes the demethylation of specific methylglutamate residues introduced into the chemoreceptors (methyl-accepting chemotaxis proteins or MCP) by CheR. Also mediates the irreversible deamidation of specific glutamine residues to glutamic acid. The sequence is that of Protein-glutamate methylesterase/protein-glutamine glutaminase from Yersinia pseudotuberculosis serotype I (strain IP32953).